A 310-amino-acid chain; its full sequence is Beta-lactamase AST-1 (310 aa).

An N-terminal signal peptide occupies residues 1-31; the sequence is MTFSALPFRRADRRRLLAAALAACALTLTAA. Cysteine 32 is lipidated: N-palmitoyl cysteine. The S-diacylglycerol cysteine moiety is linked to residue cysteine 32. Serine 91 (acyl-ester intermediate) is an active-site residue. Residue serine 151 participates in substrate binding. Glutamate 187 functions as the Proton acceptor in the catalytic mechanism. 255–257 contributes to the substrate binding site; it reads KTG.

It belongs to the class-A beta-lactamase family.

Its subcellular location is the cell membrane. It catalyses the reaction a beta-lactam + H2O = a substituted beta-amino acid. With respect to regulation, inhibited by clavulanic acid. In terms of biological role, confers high levels of resistance to amoxicillin, benzylpenicillin, piperacillin, ticarcillin and cephalothin. Not active against ceftazidime, cefotaxime and aztreonam. This is Beta-lactamase AST-1 (bla) from Nocardia asteroides.